We begin with the raw amino-acid sequence, 348 residues long: Phenylalanine--tRNA ligase alpha subunit (348 aa).

Mg(2+) is bound at residue E269.

It belongs to the class-II aminoacyl-tRNA synthetase family. Phe-tRNA synthetase alpha subunit type 1 subfamily. Tetramer of two alpha and two beta subunits. Requires Mg(2+) as cofactor.

It is found in the cytoplasm. It carries out the reaction tRNA(Phe) + L-phenylalanine + ATP = L-phenylalanyl-tRNA(Phe) + AMP + diphosphate + H(+). The chain is Phenylalanine--tRNA ligase alpha subunit from Dechloromonas aromatica (strain RCB).